The primary structure comprises 151 residues: Large-conductance mechanosensitive channel (151 aa).

Transmembrane regions (helical) follow at residues 19–39 and 85–105; these read VGII…GDVL and GLFI…FFLV.

Belongs to the MscL family. As to quaternary structure, homopentamer.

The protein resides in the cell inner membrane. Its function is as follows. Channel that opens in response to stretch forces in the membrane lipid bilayer. May participate in the regulation of osmotic pressure changes within the cell. The protein is Large-conductance mechanosensitive channel of Chlorobaculum parvum (strain DSM 263 / NCIMB 8327) (Chlorobium vibrioforme subsp. thiosulfatophilum).